The following is a 382-amino-acid chain: Anhydro-N-acetylmuramic acid kinase (382 aa).

22–29 (GTSMDGVD) provides a ligand contact to ATP.

It belongs to the anhydro-N-acetylmuramic acid kinase family.

It catalyses the reaction 1,6-anhydro-N-acetyl-beta-muramate + ATP + H2O = N-acetyl-D-muramate 6-phosphate + ADP + H(+). It functions in the pathway amino-sugar metabolism; 1,6-anhydro-N-acetylmuramate degradation. The protein operates within cell wall biogenesis; peptidoglycan recycling. Functionally, catalyzes the specific phosphorylation of 1,6-anhydro-N-acetylmuramic acid (anhMurNAc) with the simultaneous cleavage of the 1,6-anhydro ring, generating MurNAc-6-P. Is required for the utilization of anhMurNAc either imported from the medium or derived from its own cell wall murein, and thus plays a role in cell wall recycling. The sequence is that of Anhydro-N-acetylmuramic acid kinase from Burkholderia vietnamiensis (strain G4 / LMG 22486) (Burkholderia cepacia (strain R1808)).